Reading from the N-terminus, the 480-residue chain is Glycogen synthase (480 aa).

Residue K15 participates in ADP-alpha-D-glucose binding.

This sequence belongs to the glycosyltransferase 1 family. Bacterial/plant glycogen synthase subfamily.

It catalyses the reaction [(1-&gt;4)-alpha-D-glucosyl](n) + ADP-alpha-D-glucose = [(1-&gt;4)-alpha-D-glucosyl](n+1) + ADP + H(+). It functions in the pathway glycan biosynthesis; glycogen biosynthesis. Its function is as follows. Synthesizes alpha-1,4-glucan chains using ADP-glucose. This chain is Glycogen synthase, found in Rhizobium rhizogenes (strain K84 / ATCC BAA-868) (Agrobacterium radiobacter).